A 183-amino-acid polypeptide reads, in one-letter code: ATP synthase subunit delta (183 aa).

The protein belongs to the ATPase delta chain family. As to quaternary structure, F-type ATPases have 2 components, F(1) - the catalytic core - and F(0) - the membrane proton channel. F(1) has five subunits: alpha(3), beta(3), gamma(1), delta(1), epsilon(1). F(0) has three main subunits: a(1), b(2) and c(10-14). The alpha and beta chains form an alternating ring which encloses part of the gamma chain. F(1) is attached to F(0) by a central stalk formed by the gamma and epsilon chains, while a peripheral stalk is formed by the delta and b chains.

The protein resides in the cell membrane. Functionally, f(1)F(0) ATP synthase produces ATP from ADP in the presence of a proton or sodium gradient. F-type ATPases consist of two structural domains, F(1) containing the extramembraneous catalytic core and F(0) containing the membrane proton channel, linked together by a central stalk and a peripheral stalk. During catalysis, ATP synthesis in the catalytic domain of F(1) is coupled via a rotary mechanism of the central stalk subunits to proton translocation. In terms of biological role, this protein is part of the stalk that links CF(0) to CF(1). It either transmits conformational changes from CF(0) to CF(1) or is implicated in proton conduction. This Mesoplasma florum (strain ATCC 33453 / NBRC 100688 / NCTC 11704 / L1) (Acholeplasma florum) protein is ATP synthase subunit delta.